The primary structure comprises 125 residues: Histone H2A (125 aa).

Positions 1-18 (MSGRGKGGKVKAKAKSRS) are enriched in basic residues. Positions 1–21 (MSGRGKGGKVKAKAKSRSSRA) are disordered. N-acetylserine is present on Ser2. Ser2 carries the phosphoserine modification. A Glycyl lysine isopeptide (Lys-Gly) (interchain with G-Cter in ubiquitin) cross-link involves residue Lys119.

This sequence belongs to the histone H2A family. The nucleosome is a histone octamer containing two molecules each of H2A, H2B, H3 and H4 assembled in one H3-H4 heterotetramer and two H2A-H2B heterodimers. The octamer wraps approximately 147 bp of DNA. Monoubiquitination of Lys-119 gives a specific tag for epigenetic transcriptional repression. Post-translationally, phosphorylation on Ser-2 is enhanced during mitosis. Phosphorylation on Ser-2 directly represses transcription.

The protein localises to the nucleus. It localises to the chromosome. In terms of biological role, core component of nucleosome. Nucleosomes wrap and compact DNA into chromatin, limiting DNA accessibility to the cellular machineries which require DNA as a template. Histones thereby play a central role in transcription regulation, DNA repair, DNA replication and chromosomal stability. DNA accessibility is regulated via a complex set of post-translational modifications of histones, also called histone code, and nucleosome remodeling. This chain is Histone H2A, found in Chironomus thummi thummi (Midge).